The primary structure comprises 297 residues: Cell division protein FtsX (297 aa).

The Cytoplasmic segment spans residues 1 to 24 (MKAKTLSRHLREGVKNLSRNGWMT). A helical membrane pass occupies residues 25 to 45 (FASVSAVTVTLLLVGVFLTAI). Over 46–171 (MNMNHFATKV…LFDTVKTGRN (126 aa)) the chain is Extracellular. The chain crosses the membrane as a helical span at residues 172–192 (IGIVLIAGLLFTAMFLISNTI). Over 193–219 (KITIYARSTEIEIMKLVGATNWFIRWP) the chain is Cytoplasmic. Residues 220-240 (FLLEGLFLGVLGSIIPIGLIL) form a helical membrane-spanning segment. The Extracellular portion of the chain corresponds to 241-270 (VTYNSLQGMFNEKLGGTIFELLPYSPFVFQ). A helical membrane pass occupies residues 271 to 291 (LAGLLVLIGALIGMWGSVMSI). The Cytoplasmic portion of the chain corresponds to 292–297 (RRFLKV).

It belongs to the ABC-4 integral membrane protein family. FtsX subfamily. In terms of assembly, interacts with FtsE.

It localises to the cell membrane. Part of the ABC transporter FtsEX involved in asymmetric cellular division facilitating the initiation of sporulation. The polypeptide is Cell division protein FtsX (Bacillus anthracis).